A 982-amino-acid polypeptide reads, in one-letter code: E3 ubiquitin-protein ligase CBL-B (982 aa).

Residues 1–14 (MASSSSSSSSTNSS) are compositionally biased toward low complexity. The disordered stretch occupies residues 1–25 (MASSSSSSSSTNSSAVTGRLPGARS). The segment at 46–178 (PPKQAAADRR…KAIFPSGQFQ (133 aa)) is 4H. The region spanning 46-354 (PPKQAAADRR…GRSYNPDLTD (309 aa)) is the Cbl-PTB domain. Positions 179–251 (GDNFRITKAD…FEFDIFTRLF (73 aa)) are EF-hand-like. Residues Asp-232, Thr-234, Asn-236, Tyr-238, and Glu-243 each contribute to the Ca(2+) site. The interval 252-354 (QPWTSILRNW…GRSYNPDLTD (103 aa)) is SH2-like. Arg-297 provides a ligand contact to 4-O-phospho-L-tyrosine. Residues 355–383 (LCEPTPHDHIKVTQEQYELYCEMGSTFQL) are linker. Residues 384 to 423 (CKICAENDKDVKIEPCGHLMCTSCLTSWQESDGQGCPFCR) form an RING-type zinc finger. Disordered stretches follow at residues 480–582 (MNER…RTCR), 709–728 (VRNS…SHPV), and 766–911 (LKQP…PVPR). Polar residues predominate over residues 483–497 (RQNSPVTSPGSSPLS). Residues 554-576 (LPAPPPPLREPPPPPERPPPIPP) are compositionally biased toward pro residues. Residues 825–834 (PSQPPPPPPA) show a composition bias toward pro residues. Positions 927-970 (SLAENVDAKIAKLMGEGFPFEEVKRALEIAQNNVDVARSILREF) constitute a UBA domain.

As to quaternary structure, interacts with several SH3 domain-containing proteins and with poly-ubiquitinated proteins.

It localises to the cytoplasm. The catalysed reaction is S-ubiquitinyl-[E2 ubiquitin-conjugating enzyme]-L-cysteine + [acceptor protein]-L-lysine = [E2 ubiquitin-conjugating enzyme]-L-cysteine + N(6)-ubiquitinyl-[acceptor protein]-L-lysine.. It participates in protein modification; protein ubiquitination. Its function is as follows. E3 ubiquitin-protein ligase which accepts ubiquitin from specific E2 ubiquitin-conjugating enzymes, and transfers it to substrates, generally promoting their degradation by the proteasome. The chain is E3 ubiquitin-protein ligase CBL-B (cblb) from Xenopus tropicalis (Western clawed frog).